The primary structure comprises 185 residues: MQNRTGLVLCALSLLTGFLMICLGGFFISSSSSHSHRNLVVAYVLLPLGFVILLSGIFWGTYRQANDNKEMFNHVLRQHLAFQDLPLATVDRPDFYPPAYEESLDVEKQACSAGRGLLGFPPPLYTETSLEPQDKDKNDPQPEAPPPYPENIAVAAATVKTQDAEEPSTVLKAGAVLQLSELASC.

A run of 2 helical transmembrane segments spans residues 8–28 (VLCA…GFFI) and 39–59 (LVVA…GIFW). Positions 125 to 149 (YTETSLEPQDKDKNDPQPEAPPPYP) are disordered.

The protein localises to the membrane. This Rattus norvegicus (Rat) protein is Transmembrane protein 252 (Tmem252).